The primary structure comprises 129 residues: Chorion class A protein L11 (129 aa).

The first 21 residues, 1-21 (MSTFAFLLLCVQACLIQNVYG), serve as a signal peptide directing secretion. The tract at residues 22–64 (QCLGRGLGGCGCGGGLGGYGLGYGLGGYGGGYGYGGYGGGYYG) is left arm. Residues 65–112 (GYGGEGVGNVGVAGVLPVGGVTAVGGRVPIIGGVEFGGPACAGGCVSI) are central domain. A right arm region spans residues 113–129 (CGHCAPTCGCGYGGLYY).

The protein belongs to the chorion protein family.

In terms of biological role, this protein is one of many from the eggshell of the silk moth. The sequence is that of Chorion class A protein L11 from Bombyx mori (Silk moth).